A 435-amino-acid chain; its full sequence is MIVNVIGAGLAGSEVAYNLGKRGIRVRLFEMRPKKMTEVHKTGYFAELVCSNSLKSEDITNAEGLLKAEMKLMGSITLEAAEKARVPSGKALAVDRNIFAKEVTEAIESLESVEVIREEVTEFDPEEGLWVVATGPATSDGLFSFLRNLLGDDFLFFFDAVSPIVTFESIDMEHAFWGDRFGKGKDYINCPLTDGEYEELWKALVEAEVIEMEDFDRKLLFERCQPIEEIARSGKDALRYGPLRPTGLVDPRTGKEPYAVVQLRREDKEGRFYSLVGFQTRLKWNEQKRVLRKIPCLRNAEIVRYGVMHRNVYINSPKLLDIFFRLKKQPNIFFAGQITGVEGYMESAASGIYVAYNVYRILKGLSPLKLPEETMMGALFSYIIEKVEGDLKPMYANFGLLPPLKTRVKDKFGKRKKLAERAIEAMRKFLEEYPW.

An FAD-binding site is contributed by Gly7 to Gly12.

The protein belongs to the MnmG family. TrmFO subfamily. FAD is required as a cofactor.

It is found in the cytoplasm. It catalyses the reaction uridine(54) in tRNA + (6R)-5,10-methylene-5,6,7,8-tetrahydrofolate + NADH + H(+) = 5-methyluridine(54) in tRNA + (6S)-5,6,7,8-tetrahydrofolate + NAD(+). It carries out the reaction uridine(54) in tRNA + (6R)-5,10-methylene-5,6,7,8-tetrahydrofolate + NADPH + H(+) = 5-methyluridine(54) in tRNA + (6S)-5,6,7,8-tetrahydrofolate + NADP(+). Functionally, catalyzes the folate-dependent formation of 5-methyl-uridine at position 54 (M-5-U54) in all tRNAs. In Thermotoga petrophila (strain ATCC BAA-488 / DSM 13995 / JCM 10881 / RKU-1), this protein is Methylenetetrahydrofolate--tRNA-(uracil-5-)-methyltransferase TrmFO.